Here is a 238-residue protein sequence, read N- to C-terminus: Sugar fermentation stimulation protein homolog (238 aa).

This sequence belongs to the SfsA family.

This chain is Sugar fermentation stimulation protein homolog, found in Brucella abortus (strain S19).